Reading from the N-terminus, the 427-residue chain is A-kinase anchor protein 5 (427 aa).

The disordered stretch occupies residues 1–122; sequence METTISEIHV…DADLSKKKAK (122 aa). The interval 1-170 is essential to the intracellular anchoring function; the sequence is METTISEIHV…LDIQTQTPLN (170 aa). Residues 8–19 show a composition bias toward basic and acidic residues; sequence IHVENKDEKRSA. A Phosphoserine modification is found at Ser22. The S-palmitoyl cysteine moiety is linked to residue Cys36. Residues 37–48 are compositionally biased toward basic residues; it reads FKRRKKAAKALK. The AKAP CaM-binding signature appears at 76–96; that stretch reads RGAWASLKRLVTRRKRSESSK. Over residues 92 to 102 the composition is skewed to basic and acidic residues; the sequence is SESSKQQKPLE. Cys129 is lipidated: S-palmitoyl cysteine. Composition is skewed to polar residues over residues 171–182 and 242–252; these read DQATKAKSTQDL and VQPQQASPLET. Disordered regions lie at residues 171–205, 239–269, and 281–333; these read DQAT…STTS, KQDV…PPLP, and SNST…EESK. Residues 302–333 show a composition bias toward basic and acidic residues; sequence EETKPKDTELSQESDFKENGITEEKSKSEESK. Positions 392–405 are PKA-RII subunit binding domain; sequence LIETASSLVKNAIQ. The tract at residues 410–427 is tethers NFATC2 to CRAC channels; sequence QLVNEMASDDNKINNLLQ.

As to quaternary structure, binding protein for dimer of the RII-beta regulatory subunit of cAMP-dependent protein kinase (PKA) and also for the protein kinase C (PKC) and the phosphatase calcineurin (PP2B). Each enzyme is inhibited when bound to the anchoring protein. Also binds the beta2-adrenergic receptor. Part of a complex containing AKAP5, ADCY5, ADCY6 and PDE4C. Interacts with ADCY8, and enhances its phosphorylation at lipid rafts. Interacts with ORAI1 (isoform alpha) (via N-terminus) upon store depletion and in response to LTC4. Does not interact with ORAI2 and ORAI3 paralogs. Interacts (via leucine zipper domain) with NFATC2/NFAT1. Interacts with calmodulin; the interaction is calcium-independent. Interacts with KCNQ2; the interaction may help KCNQ2 channel complex to retain calcium-bound calmodulin. Interacts with KCNK2; the channel is recruited to postsynaptic microdomains by AKAP5 where it can integrate neurotransmitter receptor signals. Part of a complex composed of AKAP5 and ADRB2. Post-translationally, palmitoylated. Palmitoylation at Cys-36 and Cys-129 play a key role in the targeting of AKAP5 to lipid rafts. Palmitoylation by ZDHHC2 is required for AKAP5 function in LTP-stimulated recycling endosome exocytosis. In terms of tissue distribution, predominantly in the cerebral cortex and the postsynaptic densities of the forebrain, and to a lesser extent in adrenal medulla, lung and anterior pituitary.

Its subcellular location is the postsynaptic recycling endosome membrane. The protein localises to the cell projection. It localises to the dendrite. The protein resides in the postsynaptic cell membrane. Multivalent scaffold protein that anchors the cAMP-dependent protein kinase/PKA to cytoskeletal and/or organelle-associated proteins, targeting the signal carried by cAMP to specific intracellular effectors. Association with the beta2-adrenergic receptor (beta2-AR) not only regulates beta2-AR signaling pathway, but also the activation by PKA by switching off the beta2-AR signaling cascade. Plays a role in long term synaptic potentiation by regulating protein trafficking from the dendritic recycling endosomes to the plasma membrane and controlling both structural and functional plasticity at excitatory synapses. In hippocampal pyramidal neurons, recruits KCNK2/TREK-1 channel at postsynaptic dense bodies microdomains and converts it to a leak channel no longer sensitive to stimulation by arachidonic acid, acidic pH or mechanical stress, nor inhibited by Gq-coupled receptors but still under the negative control of Gs-coupled receptors. Associates with ORAI1 pore-forming subunit of CRAC channels in Ca(2+) signaling microdomains where it recruits NFATC2/NFAT1 and couples store-operated Ca(2+) influx to calmodulin and calcineurin signaling and activation of NFAT-dependent transcriptional responses. This Homo sapiens (Human) protein is A-kinase anchor protein 5 (AKAP5).